The sequence spans 635 residues: MIKITLKDGKVMEFEEGIKISDIAMKISPALYKKALAAKIDGETVDLMTELHKDSSLEILTFEDEMGKWTLRHTGSHMLAQAVKRLYPEVKLAIGPAIDTGFYYDFEADFTFTPEMLEKIEAEIKKIIKENHKLERFELPREEAIKLMKEKNEDYKVELIEDLPEGEVISFYKQGDFTDLCAGPHVPSTGKVKSVKLLSLAGAYWRGDEKNKMLQRIYGTAFTKKSELDEYLNMIEEAKKRDHRKLGKELDLFSIHEEGPGFPFFHPKGMIVRNILESFWREEHTKAGYQEIRTPLILNEALWHQSGHWDHYKENMYFTNIDDGDYAIKPMNCPGGILVYKNSMHSYRDLPLRLSELGIVHRHELSGALHGLMRVRCFTQDDAHLYMTKEQIKEEIVGIIKLIDKFYKLFGFEYFVELSTRPEDSMGSDEDWEIATNGLREALDSIGKEYRVNEGDGAFYGPKIDFHLKDCIGRTWQCGTIQLDFQMPERFDLSYIGADGEKHRPVMVHRTIYGSVERFIGILIEQYAGAFPTWLAPVQVKLMNITDSQYDYLKKVEEALKENNIRVEIDTRNEKIGYKIREAQLQKVPYMLILGDKEVEAGKVAVRSRKDGDLGAISLEEFIEKIKNEIKNKTN.

One can recognise a TGS domain in the interval 1-61 (MIKITLKDGK…HKDSSLEILT (61 aa)). Positions 242–532 (DHRKLGKELD…LIEQYAGAFP (291 aa)) are catalytic. Positions 333, 384, and 509 each coordinate Zn(2+).

Belongs to the class-II aminoacyl-tRNA synthetase family. In terms of assembly, homodimer. Zn(2+) serves as cofactor.

It localises to the cytoplasm. The enzyme catalyses tRNA(Thr) + L-threonine + ATP = L-threonyl-tRNA(Thr) + AMP + diphosphate + H(+). In terms of biological role, catalyzes the attachment of threonine to tRNA(Thr) in a two-step reaction: L-threonine is first activated by ATP to form Thr-AMP and then transferred to the acceptor end of tRNA(Thr). Also edits incorrectly charged L-seryl-tRNA(Thr). In Clostridium botulinum (strain Kyoto / Type A2), this protein is Threonine--tRNA ligase.